A 668-amino-acid chain; its full sequence is MLTHKTCQARKKMQVSFVIRDAEEKQHRNGVNALQLDANNGKLYSAGRDAIIRVWNTRTDSSEKYIQSMEHHNDWVNDIVLCCNGRNLISASCDTTVKVWNAQKGFCMSTLRTHRDYVQALAYAKDREQVASAGLDKAIFLWDVNTLTALTASNNTVTTSSLTGSKDSIYSLAMNPSGTVIVSGSTENILRIWDPRTCMRRMKLRGHTENVRCLVVSPDGNQVVSGSSDGTIKVWNLGQQRCVQTIHVHKEGVWSLLMSENFQYIISGSRDRNIIVTEMRNPSNKTLVCEEQAPVLSLGYNIDKTGVWATTWNSDIRCWKLPMYDRCTLNSSGGMDAQWTQGGTEVACIKGGAAIKECAVLNDKRYIITKDSQDQVVVYDVLRVVKKEQLGAVDFEAEVKKRNKQVYIPNWFTVDLKTGMPTIVLGQEEVDCFSAWVSIEAGLPECVDPTTEIKINYGKLLLEALLEYWTPPHSIPPNEMEPDMHGNGYFQVPKHTPVIFSEVGGRTVCRLLVRDAAGDSESTLLHETAPQWVTDVVIEKNIPKFLKIPFFLQPHPQMTKPERTKKDRLVANEFIQCRKVCEHVLEKVLNAETTPSGGNANNSLQNSQSDANSEGSQLPAEERIELWCNDVVVDPNMDLRTVRHFIWKQSTDLTFQYKTKQNFNYDGK.

8 WD repeats span residues 26–65, 71–110, 113–152, 164–203, 206–245, 248–287, 290–329, and 350–389; these read QHRN…SEKY, HHND…CMST, THRD…ALTA, GSKD…RRMK, GHTE…CVQT, VHKE…NKTL, EEQA…RCTL, and KGGA…KKEQ. The interval 592–616 is disordered; it reads ETTPSGGNANNSLQNSQSDANSEGS.

This sequence belongs to the WD repeat WDR48 family. In terms of assembly, catalytic component of the Usp12-46 deubiquitylase complex consisting of Usp12-46, Wdr20 and Uaf1; regulatory subunit that, together wtih Wdr20, stabilizes Usp12-46. The Usp12-46 deubiquitylase complex associates with arr/arrow; the interaction leads to deubiquitination and stabilization of arr/arrow.

Its function is as follows. Regulatory component of the Usp12-46 deubiquitylase complex. activates deubiquitination by increasing the catalytic turnover without increasing the affinity of deubiquitinating enzymes for the substrate. The complex deubiquitylates the wg/wingless-signaling receptor arr/arrow, which stabilizes the receptor and increases its concentration at the cell surface; this enhances the sensitivity of cells to wg/wingless-signal stimulation. This increases the amplitude and spatial range of the signaling response to the wg/wingless morphogen gradient, facilitating the precise concentration-dependent regulation of its target genes. Together with Wdr20 and Usp12-46 required for wg/wingless-mediated signaling in the wing imaginal disc and for wg/wingless-dependent regulation of intestinal stem cell proliferation. The protein is WD repeat-containing protein 48 homolog of Drosophila melanogaster (Fruit fly).